A 382-amino-acid chain; its full sequence is Mannitol-1-phosphate 5-dehydrogenase (382 aa).

3–14 (AVHFGAGNIGRG) is a binding site for NAD(+).

The protein belongs to the mannitol dehydrogenase family.

The enzyme catalyses D-mannitol 1-phosphate + NAD(+) = beta-D-fructose 6-phosphate + NADH + H(+). This chain is Mannitol-1-phosphate 5-dehydrogenase, found in Exiguobacterium sp. (strain ATCC BAA-1283 / AT1b).